Here is a 115-residue protein sequence, read N- to C-terminus: Na(+)/H(+) antiporter subunit C1 (115 aa).

A run of 3 helical transmembrane segments spans residues 1-21 (MEIL…YLIL), 28-48 (IIIG…TMGG), and 72-92 (LILT…VLAF).

Belongs to the CPA3 antiporters (TC 2.A.63) subunit C family. As to quaternary structure, may form a heterooligomeric complex that consists of seven subunits: mnhA1, mnhB1, mnhC1, mnhD1, mnhE1, mnhF1 and mnhG1.

The protein resides in the cell membrane. Functionally, mnh complex is a Na(+)/H(+) antiporter involved in Na(+) excretion. The chain is Na(+)/H(+) antiporter subunit C1 (mnhC1) from Staphylococcus saprophyticus subsp. saprophyticus (strain ATCC 15305 / DSM 20229 / NCIMB 8711 / NCTC 7292 / S-41).